Here is a 901-residue protein sequence, read N- to C-terminus: HTH-type transcriptional regulator MalT (901 aa).

Residue 39–46 (SPAGYGKT) participates in ATP binding. The HTH luxR-type domain maps to 829–894 (ELIRTSPLTQ…DAVQHAQQLL (66 aa)). The H-T-H motif DNA-binding region spans 853 to 872 (NEQIAGELEVAATTIKTHIR).

Belongs to the MalT family. In terms of assembly, monomer in solution. Oligomerizes to an active state in the presence of the positive effectors ATP and maltotriose.

Its activity is regulated as follows. Activated by ATP and maltotriose, which are both required for DNA binding. Its function is as follows. Positively regulates the transcription of the maltose regulon whose gene products are responsible for uptake and catabolism of malto-oligosaccharides. Specifically binds to the promoter region of its target genes, recognizing a short DNA motif called the MalT box. This is HTH-type transcriptional regulator MalT from Escherichia coli (strain ATCC 8739 / DSM 1576 / NBRC 3972 / NCIMB 8545 / WDCM 00012 / Crooks).